The sequence spans 3856 residues: Serine/threonine-protein kinase ATM (3856 aa).

The PWWP domain maps to Val108–Ser162. The tract at residues Gly648–Pro681 is disordered. Positions Val2727–Gly3393 constitute an FAT domain. Positions Arg3233–Ser3249 match the Bipartite nuclear localization signal motif. One can recognise a PI3K/PI4K catalytic domain in the interval Leu3499–Met3811. Positions Val3505–Ala3511 are G-loop. The interval Gly3678 to Asn3686 is catalytic loop. Residues His3698 to Thr3722 are activation loop. One can recognise an FATC domain in the interval Glu3824–Met3856.

This sequence belongs to the PI3/PI4-kinase family. In terms of assembly, interacts with RUG3. As to expression, ubiquitously expressed at low levels with slightly higher levels in flower buds.

The protein resides in the nucleus. The enzyme catalyses L-seryl-[protein] + ATP = O-phospho-L-seryl-[protein] + ADP + H(+). The catalysed reaction is L-threonyl-[protein] + ATP = O-phospho-L-threonyl-[protein] + ADP + H(+). In terms of biological role, serine/threonine protein kinase which activates checkpoint signaling upon genotoxic stresses such as ionizing radiation (IR) or DNA replication stalling. Plays a central role in the perception and response to both stress-induced damage in somatic cells and developmentally programmed DNA damage during meiosis. Recognizes the substrate consensus sequence [ST]-Q. Phosphorylates histone variant H2AX to form H2AXS139ph at double strand breaks (DSBs), thereby regulating DNA damage response mechanism. Involved in transcriptional regulation of RAD51, PARP1, GR1, and LIG4 in response to DNA double strand breaks. Plays a dual role by activating the DNA damage response at dysfunctional telomeres and yet preventing this activation at functional telomeres. Not required for telomere length homeostasis. Regulates DNA damage response (DDR) synergistically with RUG3. Together with RUG3, involved in the splicing of the ND2/NAD2 mRNA. This chain is Serine/threonine-protein kinase ATM, found in Arabidopsis thaliana (Mouse-ear cress).